The sequence spans 407 residues: Imidazolonepropionase (407 aa).

Fe(3+) contacts are provided by H75 and H77. Zn(2+) contacts are provided by H75 and H77. Positions 84, 147, and 180 each coordinate 4-imidazolone-5-propanoate. Y147 is an N-formimidoyl-L-glutamate binding site. Residue H245 participates in Fe(3+) binding. H245 lines the Zn(2+) pocket. Q248 provides a ligand contact to 4-imidazolone-5-propanoate. Fe(3+) is bound at residue D320. D320 serves as a coordination point for Zn(2+). Positions 322 and 324 each coordinate N-formimidoyl-L-glutamate. Residue S325 participates in 4-imidazolone-5-propanoate binding.

The protein belongs to the metallo-dependent hydrolases superfamily. HutI family. Zn(2+) is required as a cofactor. It depends on Fe(3+) as a cofactor.

It is found in the cytoplasm. It catalyses the reaction 4-imidazolone-5-propanoate + H2O = N-formimidoyl-L-glutamate. Its pathway is amino-acid degradation; L-histidine degradation into L-glutamate; N-formimidoyl-L-glutamate from L-histidine: step 3/3. In terms of biological role, catalyzes the hydrolytic cleavage of the carbon-nitrogen bond in imidazolone-5-propanoate to yield N-formimidoyl-L-glutamate. It is the third step in the universal histidine degradation pathway. The chain is Imidazolonepropionase from Pseudoalteromonas atlantica (strain T6c / ATCC BAA-1087).